A 289-amino-acid chain; its full sequence is Pyridoxal kinase PdxY (289 aa).

Substrate-binding positions include Ser-9 and 44-45 (TQ). Positions 112, 144, 149, and 182 each coordinate ATP. Residue Asp-225 coordinates substrate.

This sequence belongs to the pyridoxine kinase family. PdxY subfamily. In terms of assembly, homodimer. Requires Mg(2+) as cofactor.

It catalyses the reaction pyridoxal + ATP = pyridoxal 5'-phosphate + ADP + H(+). It functions in the pathway cofactor metabolism; pyridoxal 5'-phosphate salvage; pyridoxal 5'-phosphate from pyridoxal: step 1/1. Pyridoxal kinase involved in the salvage pathway of pyridoxal 5'-phosphate (PLP). Catalyzes the phosphorylation of pyridoxal to PLP. The protein is Pyridoxal kinase PdxY of Aliivibrio fischeri (strain ATCC 700601 / ES114) (Vibrio fischeri).